Reading from the N-terminus, the 602-residue chain is Protein nessun dorma (602 aa).

A coiled-coil region spans residues 188–208 (AEAKYIQQRLDYLELDLSDAE).

Interacts (via N-terminus) with both members of the centralspindlin complex, Pav and Tum. In terms of tissue distribution, detected in testis (at protein level). Also expressed in ovary.

It is found in the midbody. Required during male meiosis for completion of spermatocyte cytokinesis and possibly also required in female germline cells. Also involved in ring canal formation in male and female germline cells. Not essential for cleavage furrow ingression but is required for contractile ring stability and the attachment of the furrowing membrane to the actomyosin ring in late telophase. Displays high binding affinity for beta-galactosides. The polypeptide is Protein nessun dorma (Drosophila melanogaster (Fruit fly)).